A 422-amino-acid chain; its full sequence is Gamma-glutamyl phosphate reductase (422 aa).

This sequence belongs to the gamma-glutamyl phosphate reductase family.

Its subcellular location is the cytoplasm. It catalyses the reaction L-glutamate 5-semialdehyde + phosphate + NADP(+) = L-glutamyl 5-phosphate + NADPH + H(+). Its pathway is amino-acid biosynthesis; L-proline biosynthesis; L-glutamate 5-semialdehyde from L-glutamate: step 2/2. Its function is as follows. Catalyzes the NADPH-dependent reduction of L-glutamate 5-phosphate into L-glutamate 5-semialdehyde and phosphate. The product spontaneously undergoes cyclization to form 1-pyrroline-5-carboxylate. This chain is Gamma-glutamyl phosphate reductase, found in Nitrosomonas europaea (strain ATCC 19718 / CIP 103999 / KCTC 2705 / NBRC 14298).